The following is a 166-amino-acid chain: Small ribosomal subunit protein uS5 (166 aa).

The S5 DRBM domain maps to 11 to 74 (LEDRVVSINR…EDAKKNLINV (64 aa)).

Belongs to the universal ribosomal protein uS5 family. In terms of assembly, part of the 30S ribosomal subunit. Contacts proteins S4 and S8.

In terms of biological role, with S4 and S12 plays an important role in translational accuracy. Its function is as follows. Located at the back of the 30S subunit body where it stabilizes the conformation of the head with respect to the body. This chain is Small ribosomal subunit protein uS5, found in Latilactobacillus sakei subsp. sakei (strain 23K) (Lactobacillus sakei subsp. sakei).